The sequence spans 130 residues: Calcium-binding protein KRP1 (130 aa).

One can recognise an EF-hand domain in the interval 72-107 (LTDEDVRCMIKEGDFDCDGALNQMEFCVLMFRLSPD). Ca(2+)-binding residues include aspartate 85, aspartate 87, aspartate 89, and glutamate 96.

Functionally, potential calcium sensor that binds calcium in vitro. This is Calcium-binding protein KRP1 from Arabidopsis thaliana (Mouse-ear cress).